A 360-amino-acid polypeptide reads, in one-letter code: UDP-N-acetylglucosamine--N-acetylmuramyl-(pentapeptide) pyrophosphoryl-undecaprenol N-acetylglucosamine transferase (360 aa).

UDP-N-acetyl-alpha-D-glucosamine is bound by residues S198 and Q289.

This sequence belongs to the glycosyltransferase 28 family. MurG subfamily.

The protein localises to the cell membrane. It catalyses the reaction Mur2Ac(oyl-L-Ala-gamma-D-Glu-L-Lys-D-Ala-D-Ala)-di-trans,octa-cis-undecaprenyl diphosphate + UDP-N-acetyl-alpha-D-glucosamine = beta-D-GlcNAc-(1-&gt;4)-Mur2Ac(oyl-L-Ala-gamma-D-Glu-L-Lys-D-Ala-D-Ala)-di-trans,octa-cis-undecaprenyl diphosphate + UDP + H(+). It participates in cell wall biogenesis; peptidoglycan biosynthesis. Functionally, cell wall formation. Catalyzes the transfer of a GlcNAc subunit on undecaprenyl-pyrophosphoryl-MurNAc-pentapeptide (lipid intermediate I) to form undecaprenyl-pyrophosphoryl-MurNAc-(pentapeptide)GlcNAc (lipid intermediate II). The sequence is that of UDP-N-acetylglucosamine--N-acetylmuramyl-(pentapeptide) pyrophosphoryl-undecaprenol N-acetylglucosamine transferase from Streptococcus pyogenes serotype M3 (strain SSI-1).